Consider the following 136-residue polypeptide: MAEPRRGDLWLVSLGAARAGEPGKHRPAVVVSVDELLTGIDDELVVVVPVSSSRSRTPLRPPVAPSEGVAADSVAVCRGVRAVARARLVERLGALKPATMRAIENALTLILGLPTGPERGEAATHSPVRWTGGRDP.

Positions 115 to 136 are disordered; it reads TGPERGEAATHSPVRWTGGRDP.

The protein belongs to the PemK/MazF family. In terms of assembly, forms a complex with cognate antitoxin MazE7.

Functionally, toxic component of a type II toxin-antitoxin (TA) system. Upon expression in E.coli and M.smegmatis inhibits cell growth and colony formation. Its toxic effect is neutralized by coexpression with cognate antitoxin MazE7. Probably an endoribonuclease. The sequence is that of Probable endoribonuclease MazF7 (mazF7) from Mycobacterium tuberculosis (strain ATCC 25618 / H37Rv).